The chain runs to 148 residues: 3-hydroxyacyl-[acyl-carrier-protein] dehydratase FabZ (148 aa).

Residue His-55 is part of the active site.

This sequence belongs to the thioester dehydratase family. FabZ subfamily.

The protein resides in the cytoplasm. The catalysed reaction is a (3R)-hydroxyacyl-[ACP] = a (2E)-enoyl-[ACP] + H2O. Its function is as follows. Involved in unsaturated fatty acids biosynthesis. Catalyzes the dehydration of short chain beta-hydroxyacyl-ACPs and long chain saturated and unsaturated beta-hydroxyacyl-ACPs. This is 3-hydroxyacyl-[acyl-carrier-protein] dehydratase FabZ from Haemophilus influenzae (strain PittEE).